We begin with the raw amino-acid sequence, 270 residues long: Proteasome subunit alpha (270 aa).

Residues 229-270 (LLDTEAAGSTPTDAPSDTEDGDSTDGTDRADGTTDSTEETEK) are disordered. Residues 244-253 (SDTEDGDSTD) show a composition bias toward acidic residues.

It belongs to the peptidase T1A family. As to quaternary structure, the 20S proteasome core is composed of 14 alpha and 14 beta subunits that assemble into four stacked heptameric rings, resulting in a barrel-shaped structure. The two inner rings, each composed of seven catalytic beta subunits, are sandwiched by two outer rings, each composed of seven alpha subunits. The catalytic chamber with the active sites is on the inside of the barrel. Has a gated structure, the ends of the cylinder being occluded by the N-termini of the alpha-subunits. Is capped by the proteasome-associated ATPase, ARC.

Its subcellular location is the cytoplasm. It participates in protein degradation; proteasomal Pup-dependent pathway. With respect to regulation, the formation of the proteasomal ATPase ARC-20S proteasome complex, likely via the docking of the C-termini of ARC into the intersubunit pockets in the alpha-rings, may trigger opening of the gate for substrate entry. Interconversion between the open-gate and close-gate conformations leads to a dynamic regulation of the 20S proteasome proteolysis activity. In terms of biological role, component of the proteasome core, a large protease complex with broad specificity involved in protein degradation. This chain is Proteasome subunit alpha, found in Streptomyces griseus subsp. griseus (strain JCM 4626 / CBS 651.72 / NBRC 13350 / KCC S-0626 / ISP 5235).